A 429-amino-acid chain; its full sequence is Type II methyltransferase M.AgeI (429 aa).

Positions 1–429 constitute an SAM-dependent MTase C5-type domain; that stretch reads MKTIDLFCGA…MAETIKVAIS (429 aa). Cysteine 80 is a catalytic residue.

Belongs to the class I-like SAM-binding methyltransferase superfamily. C5-methyltransferase family.

The catalysed reaction is a 2'-deoxycytidine in DNA + S-adenosyl-L-methionine = a 5-methyl-2'-deoxycytidine in DNA + S-adenosyl-L-homocysteine + H(+). In terms of biological role, a methylase, recognizes the double-stranded sequence 5'-ACCGGT-3', methylates C-3 on both strands, and protects the DNA from cleavage by the AgeI endonuclease. This Thalassovita gelatinovora (Thalassobius gelatinovorus) protein is Type II methyltransferase M.AgeI (ageIM).